Consider the following 213-residue polypeptide: Orotate phosphoribosyltransferase (213 aa).

Lys-26 is a binding site for 5-phospho-alpha-D-ribose 1-diphosphate. 34–35 (FF) provides a ligand contact to orotate. 5-phospho-alpha-D-ribose 1-diphosphate contacts are provided by residues 72–73 (YK), Arg-99, Lys-100, Lys-103, His-105, and 124–132 (DDVITAGTA). Orotate-binding residues include Thr-128 and Arg-156.

The protein belongs to the purine/pyrimidine phosphoribosyltransferase family. PyrE subfamily. Homodimer. Mg(2+) serves as cofactor.

The enzyme catalyses orotidine 5'-phosphate + diphosphate = orotate + 5-phospho-alpha-D-ribose 1-diphosphate. It functions in the pathway pyrimidine metabolism; UMP biosynthesis via de novo pathway; UMP from orotate: step 1/2. Its function is as follows. Catalyzes the transfer of a ribosyl phosphate group from 5-phosphoribose 1-diphosphate to orotate, leading to the formation of orotidine monophosphate (OMP). The sequence is that of Orotate phosphoribosyltransferase from Haemophilus influenzae (strain 86-028NP).